Here is a 170-residue protein sequence, read N- to C-terminus: uncharacterized protein (170 aa).

This is an uncharacterized protein from Homo sapiens (Human).